Reading from the N-terminus, the 324-residue chain is Probable peptidylglycine alpha-hydroxylating monooxygenase 1 (324 aa).

The N-terminal stretch at M1 to A22 is a signal peptide. 2 disulfide bridges follow: C41-C85 and C73-C101. Cu cation contacts are provided by H66 and H67. H142 is a binding site for Cu cation. N182 is a glycosylation site (N-linked (GlcNAc...) asparagine). 3 residues coordinate Cu cation: H207, H209, and M284. Cysteines 264 and 285 form a disulfide.

Belongs to the copper type II ascorbate-dependent monooxygenase family. The cofactor is Cu(2+).

The protein resides in the secreted. The catalysed reaction is a [peptide]-C-terminal glycine + 2 L-ascorbate + O2 = a [peptide]-C-terminal (2S)-2-hydroxyglycine + 2 monodehydro-L-ascorbate radical + H2O. Its function is as follows. Monooxygenase that catalyzes an essential reaction in C-terminal alpha-amidation of peptides. Produces an unstable peptidyl(2-hydroxyglycine) intermediate. C-terminal amidation of peptides such as neuropeptides is essential for full biological activity. This chain is Probable peptidylglycine alpha-hydroxylating monooxygenase 1, found in Caenorhabditis elegans.